Reading from the N-terminus, the 193-residue chain is Holliday junction branch migration complex subunit RuvA (193 aa).

The domain I stretch occupies residues 1–63 (MYAYLKGKIM…EDAQLLYGFK (63 aa)). Residues 64–141 (DEEEKAMFNA…TITDESELFK (78 aa)) form a domain II region. The segment at 141–142 (KE) is flexible linker. Residues 143 to 193 (VNDTLLNEALLAFEALGYSKREITKIEKELKKKQFSTVDEYVKQGLQMFVS) form a domain III region.

Belongs to the RuvA family. As to quaternary structure, homotetramer. Forms an RuvA(8)-RuvB(12)-Holliday junction (HJ) complex. HJ DNA is sandwiched between 2 RuvA tetramers; dsDNA enters through RuvA and exits via RuvB. An RuvB hexamer assembles on each DNA strand where it exits the tetramer. Each RuvB hexamer is contacted by two RuvA subunits (via domain III) on 2 adjacent RuvB subunits; this complex drives branch migration. In the full resolvosome a probable DNA-RuvA(4)-RuvB(12)-RuvC(2) complex forms which resolves the HJ.

It localises to the cytoplasm. Functionally, the RuvA-RuvB-RuvC complex processes Holliday junction (HJ) DNA during genetic recombination and DNA repair, while the RuvA-RuvB complex plays an important role in the rescue of blocked DNA replication forks via replication fork reversal (RFR). RuvA specifically binds to HJ cruciform DNA, conferring on it an open structure. The RuvB hexamer acts as an ATP-dependent pump, pulling dsDNA into and through the RuvAB complex. HJ branch migration allows RuvC to scan DNA until it finds its consensus sequence, where it cleaves and resolves the cruciform DNA. The chain is Holliday junction branch migration complex subunit RuvA from Macrococcus caseolyticus (strain JCSC5402) (Macrococcoides caseolyticum).